Reading from the N-terminus, the 407-residue chain is 1-deoxy-D-xylulose 5-phosphate reductoisomerase (407 aa).

NADPH-binding residues include Thr25, Gly26, Ser27, Ile28, Asn53, and Asn136. Lys137 contacts 1-deoxy-D-xylulose 5-phosphate. Residue Glu138 participates in NADPH binding. Mn(2+) is bound at residue Asp162. 1-deoxy-D-xylulose 5-phosphate is bound by residues Ser163, Glu164, Ser188, and His211. Glu164 is a Mn(2+) binding site. Position 217 (Gly217) interacts with NADPH. 1-deoxy-D-xylulose 5-phosphate is bound by residues Ser224, Asn229, Lys230, and Glu233. Residue Glu233 participates in Mn(2+) binding.

The protein belongs to the DXR family. The cofactor is Mg(2+). Mn(2+) serves as cofactor.

It carries out the reaction 2-C-methyl-D-erythritol 4-phosphate + NADP(+) = 1-deoxy-D-xylulose 5-phosphate + NADPH + H(+). It participates in isoprenoid biosynthesis; isopentenyl diphosphate biosynthesis via DXP pathway; isopentenyl diphosphate from 1-deoxy-D-xylulose 5-phosphate: step 1/6. Its function is as follows. Catalyzes the NADPH-dependent rearrangement and reduction of 1-deoxy-D-xylulose-5-phosphate (DXP) to 2-C-methyl-D-erythritol 4-phosphate (MEP). The sequence is that of 1-deoxy-D-xylulose 5-phosphate reductoisomerase from Afipia carboxidovorans (strain ATCC 49405 / DSM 1227 / KCTC 32145 / OM5) (Oligotropha carboxidovorans).